Reading from the N-terminus, the 483-residue chain is MKGFHAFCVILLIFGSVSEAKFDDFEDEEDIVEYDDNDFAEFEDVAEDSVTESPQRVIITEDDEDETTVELEGQDESQEGDFEDADTQEGDTESEPYDDEEFEGYEDKPDTSSSKSKDPITIVDVPAHLQNSWESYYLEILMVTGLLAYIMNYIIGKNKNSRLAQAWFNTHRELLESNFTLVGDDGTNKEATSTGKLNQENEHIYNLWCSGRVCCEGMLIQLRFLKRQDLLNVLARMMRPVSDQVQIKVTMNDEDMDTYVFAVGARKALVRLQKEMQDLSEFCSDKPKSGAKYGLPDSLAILSEMGEVTDGMMDTKMLHFLTHYADKIESIHFSDQFSGPKIMQEEGQPLKLPDTKRTLLFTFNVPGSGNTYPKDMEALLPLMNMVIYSIDKAKKFRLNREGKQKADKNRARVEENFLKLTHVQRQEAAQSRREEKKRAEKERIMNEEDPEKQRRLEEAALRREQKKLEKKQMKMKQIKVKAM.

The first 20 residues, 1-20 (MKGFHAFCVILLIFGSVSEA), serve as a signal peptide directing secretion. Topologically, residues 21–135 (KFDDFEDEED…PAHLQNSWES (115 aa)) are cytoplasmic. The disordered stretch occupies residues 44-118 (DVAEDSVTES…PDTSSSKSKD (75 aa)). Acidic residues predominate over residues 60 to 104 (TEDDEDETTVELEGQDESQEGDFEDADTQEGDTESEPYDDEEFEG). Basic and acidic residues predominate over residues 105-118 (YEDKPDTSSSKSKD). The chain crosses the membrane as a helical span at residues 136 to 156 (YYLEILMVTGLLAYIMNYIIG). The Lumenal segment spans residues 157–483 (KNKNSRLAQA…KMKQIKVKAM (327 aa)). The N-linked (GlcNAc...) asparagine glycan is linked to asparagine 178. The interval 424-483 (QRQEAAQSRREEKKRAEKERIMNEEDPEKQRRLEEAALRREQKKLEKKQMKMKQIKVKAM) is disordered. Basic and acidic residues predominate over residues 430–472 (QSRREEKKRAEKERIMNEEDPEKQRRLEEAALRREQKKLEKKQ). Positions 450-483 (PEKQRRLEEAALRREQKKLEKKQMKMKQIKVKAM) form a coiled coil. Residues 473 to 483 (MKMKQIKVKAM) show a composition bias toward basic residues.

It belongs to the CCDC47 family. In terms of assembly, component of the PAT complex, composed of WDR83OS/Asterix and CCDC47. The PAT complex is part of the multi-pass translocon (MPT) complex, composed of three subcomplexes, the GEL complex (composed of RAB5IF/OPTI and TMCO1), the BOS complex (composed of NCLN/Nicalin, NOMO1 and TMEM147) and the PAT complex (composed of WDR83OS/Asterix and CCDC47). The MPT complex associates with the SEC61 complex. Interacts with VCP, HSPA5, DERL1, DERL2 and SELENOS.

Its subcellular location is the endoplasmic reticulum membrane. The protein localises to the rough endoplasmic reticulum membrane. In terms of biological role, component of the multi-pass translocon (MPT) complex that mediates insertion of multi-pass membrane proteins into the lipid bilayer of membranes. The MPT complex takes over after the SEC61 complex: following membrane insertion of the first few transmembrane segments of proteins by the SEC61 complex, the MPT complex occludes the lateral gate of the SEC61 complex to promote insertion of subsequent transmembrane regions. Within the MPT complex, the PAT subcomplex sequesters any highly polar regions in the transmembrane domains away from the non-polar membrane environment until they can be buried in the interior of the fully assembled protein. Within the PAT subcomplex, CCDC47 occludes the lateral gate of the SEC61 complex. Involved in the regulation of calcium ion homeostasis in the ER. Required for proper protein degradation via the ERAD (ER-associated degradation) pathway. Has an essential role in the maintenance of ER organization during embryogenesis. The chain is PAT complex subunit CCDC47 (CCDC47) from Bos taurus (Bovine).